The chain runs to 493 residues: Cobyric acid synthase (493 aa).

A GATase cobBQ-type domain is found at 246–440 (PIDIAVIKMP…IHGVFDGVVF (195 aa)). Cys-326 (nucleophile) is an active-site residue. The active site involves His-432.

Belongs to the CobB/CobQ family. CobQ subfamily.

The protein operates within cofactor biosynthesis; adenosylcobalamin biosynthesis. Its function is as follows. Catalyzes amidations at positions B, D, E, and G on adenosylcobyrinic A,C-diamide. NH(2) groups are provided by glutamine, and one molecule of ATP is hydrogenolyzed for each amidation. This Clostridium botulinum (strain Okra / Type B1) protein is Cobyric acid synthase.